The following is an 897-amino-acid chain: Protein transport protein SEC24-1 (897 aa).

Positions 213, 216, 235, and 238 each coordinate Zn(2+). Residues 213–238 (CRRCRSYINPFAKFIEQGRRWRCNFC) form a zinc finger-like region.

It belongs to the SEC23/SEC24 family. SEC24 subfamily. In terms of assembly, the COPII coat is composed of at least 5 proteins: the SEC23/24 complex, the SEC13/31 complex, and the protein SAR1. Golgi apparatus membrane; Peripheral membrane protein; Cytoplasmic side.

It is found in the cytoplasm. The protein resides in the cytoplasmic vesicle. The protein localises to the COPII-coated vesicle membrane. It localises to the endoplasmic reticulum membrane. Its subcellular location is the golgi apparatus membrane. Its function is as follows. Component of the coat protein complex II (COPII) which promotes the formation of transport vesicles from the endoplasmic reticulum (ER). The coat has two main functions, the physical deformation of the endoplasmic reticulum membrane into vesicles and the selection of cargo molecules. The sequence is that of Protein transport protein SEC24-1 (SEC241) from Candida glabrata (strain ATCC 2001 / BCRC 20586 / JCM 3761 / NBRC 0622 / NRRL Y-65 / CBS 138) (Yeast).